The sequence spans 174 residues: UPF0340 protein MW2038 (174 aa).

This sequence belongs to the UPF0340 family.

This chain is UPF0340 protein MW2038, found in Staphylococcus aureus (strain MW2).